A 252-amino-acid polypeptide reads, in one-letter code: Chitooligosaccharide deacetylase (252 aa).

Mg(2+) contacts are provided by His61 and His125.

Belongs to the YdjC deacetylase family. ChbG subfamily. As to quaternary structure, homodimer. The cofactor is Mg(2+).

The protein resides in the cytoplasm. It catalyses the reaction N,N'-diacetylchitobiose + H2O = N-acetyl-beta-D-glucosaminyl-(1-&gt;4)-D-glucosamine + acetate. It carries out the reaction diacetylchitobiose-6'-phosphate + H2O = N'-monoacetylchitobiose-6'-phosphate + acetate. It functions in the pathway glycan degradation; chitin degradation. Functionally, involved in the degradation of chitin. ChbG is essential for growth on the acetylated chitooligosaccharides chitobiose and chitotriose but is dispensable for growth on cellobiose and chitosan dimer, the deacetylated form of chitobiose. Deacetylation of chitobiose-6-P and chitotriose-6-P is necessary for both the activation of the chb promoter by the regulatory protein ChbR and the hydrolysis of phosphorylated beta-glucosides by the phospho-beta-glucosidase ChbF. Catalyzes the removal of only one acetyl group from chitobiose-6-P to yield monoacetylchitobiose-6-P, the inducer of ChbR and the substrate of ChbF. The protein is Chitooligosaccharide deacetylase of Escherichia fergusonii (strain ATCC 35469 / DSM 13698 / CCUG 18766 / IAM 14443 / JCM 21226 / LMG 7866 / NBRC 102419 / NCTC 12128 / CDC 0568-73).